Consider the following 585-residue polypeptide: Zinc finger protein 496 (585 aa).

Positions 1–41 (MPTALCPRVLAPKESEEPRKMRSPPGENPSPQGEPPSPESS) are disordered. Residues 11 to 20 (APKESEEPRK) are compositionally biased toward basic and acidic residues. Lysine 13 is covalently cross-linked (Glycyl lysine isopeptide (Lys-Gly) (interchain with G-Cter in SUMO2)). A compositionally biased stretch (pro residues) spans 26-38 (GENPSPQGEPPSP). The region spanning 42–124 (RRLFRRFRYQ…AAVEALEREP (83 aa)) is the SCAN box domain. Residues 141–167 (DDGDGPAAPQDLEQERMSAESQSYPDA) form a disordered region. Serine 182 carries the phosphoserine modification. The 75-residue stretch at 220–294 (SPFKDMILCF…DLQDKEIPQA (75 aa)) folds into the KRAB domain. Positions 358–397 (SSSGDEDSQHSPYCTEELRSPPEDLHSVPAHQSNASAEGE) are disordered. Basic and acidic residues predominate over residues 373 to 383 (EELRSPPEDLH). Over residues 387-397 (AHQSNASAEGE) the composition is skewed to polar residues. The segment at 405-427 (YVCPNCGKIFRWRVNFIRHLRSR) adopts a C2H2-type 1; degenerate zinc-finger fold. C2H2-type zinc fingers lie at residues 433–455 (HKCSVCGELFSDSEDLDGHLETH) and 461–483 (YRCTACGKSFRLNSHLISHRRIH). Residues 483 to 506 (HLQPASQQPMKKSEEEALETEGTG) form a disordered region. Lysine 494 is covalently cross-linked (Glycyl lysine isopeptide (Lys-Gly) (interchain with G-Cter in SUMO2)). C2H2-type zinc fingers lie at residues 520–543 (FQCGDCEKSFQRHDHLVRHRRHCH) and 551–573 (FQCRYCVKTFRQNYDLLRHERLH). The Nuclear localization signal motif lies at 575 to 579 (KRRSK).

It belongs to the krueppel C2H2-type zinc-finger protein family. Interacts (via zinc-fingers) with JARID2. Interacts with NSD1.

It is found in the nucleus. DNA-binding transcription factor that can both act as an activator and a repressor. The protein is Zinc finger protein 496 (Znf496) of Mus musculus (Mouse).